We begin with the raw amino-acid sequence, 101 residues long: Chaperone modulatory protein CbpM (101 aa).

This sequence belongs to the CbpM family.

Interacts with CbpA and inhibits both the DnaJ-like co-chaperone activity and the DNA binding activity of CbpA. Together with CbpA, modulates the activity of the DnaK chaperone system. Does not inhibit the co-chaperone activity of DnaJ. The polypeptide is Chaperone modulatory protein CbpM (Citrobacter koseri (strain ATCC BAA-895 / CDC 4225-83 / SGSC4696)).